The chain runs to 463 residues: Exodeoxyribonuclease 7 large subunit (463 aa).

This sequence belongs to the XseA family. Heterooligomer composed of large and small subunits.

Its subcellular location is the cytoplasm. The catalysed reaction is Exonucleolytic cleavage in either 5'- to 3'- or 3'- to 5'-direction to yield nucleoside 5'-phosphates.. Its function is as follows. Bidirectionally degrades single-stranded DNA into large acid-insoluble oligonucleotides, which are then degraded further into small acid-soluble oligonucleotides. In Klebsiella pneumoniae (strain 342), this protein is Exodeoxyribonuclease 7 large subunit.